Consider the following 1897-residue polypeptide: 1,3-beta-glucan synthase component FKS1 (1897 aa).

A disordered region spans residues 1 to 106; it reads MSGYPAGHYE…SETFSDFTMR (106 aa). The span at 8 to 29 shows a compositional bias: basic and acidic residues; sequence HYEDGYGHQEHGGDAYYQDEHG. Low complexity predominate over residues 74-83; that stretch reads GDQYYDQGNG. The next 17 helical transmembrane spans lie at 487–507, 525–545, 564–584, 591–611, 655–675, 707–727, 728–748, 1329–1349, 1386–1406, 1473–1493, 1497–1517, 1588–1608, 1630–1650, 1666–1686, 1701–1721, 1766–1786, and 1826–1846; these read IWVI…PTLY, WSAV…ATLC, LMFL…VFGF, TICL…FFFF, LWIC…TLSL, ILLG…SYLW, YVIC…VSIW, NMFI…LGAL, CVVS…VQEL, FAGP…FATS, TPAL…PFLF, IFFS…VPYL, IAIV…MFFG, FGAV…LVIF, VLGM…IISL, FSAD…ALCI, and FAIL…APLV.

Belongs to the glycosyltransferase 48 family. In terms of assembly, component of the 1,3-beta-glucan synthase (GS) complex composed of a catalytic subunit fksA and a regulatory subunit.

It localises to the mitochondrion. The protein localises to the cell membrane. It catalyses the reaction [(1-&gt;3)-beta-D-glucosyl](n) + UDP-alpha-D-glucose = [(1-&gt;3)-beta-D-glucosyl](n+1) + UDP + H(+). Its function is as follows. Catalytic subunit of the 1,3-beta-glucan synthase. Synthesizes 1,3-beta-glucan, a major structural component of the fungal cell wall. Involved in cell wall synthesis, maintenance and remodeling. In Aspergillus niger (strain ATCC MYA-4892 / CBS 513.88 / FGSC A1513), this protein is 1,3-beta-glucan synthase component FKS1.